Here is a 297-residue protein sequence, read N- to C-terminus: 1D-myo-inositol 2-acetamido-2-deoxy-alpha-D-glucopyranoside deacetylase (297 aa).

Positions 14, 17, and 149 each coordinate Zn(2+).

The protein belongs to the MshB deacetylase family. Requires Zn(2+) as cofactor.

The enzyme catalyses 1D-myo-inositol 2-acetamido-2-deoxy-alpha-D-glucopyranoside + H2O = 1D-myo-inositol 2-amino-2-deoxy-alpha-D-glucopyranoside + acetate. Functionally, catalyzes the deacetylation of 1D-myo-inositol 2-acetamido-2-deoxy-alpha-D-glucopyranoside (GlcNAc-Ins) in the mycothiol biosynthesis pathway. This Thermomonospora curvata (strain ATCC 19995 / DSM 43183 / JCM 3096 / KCTC 9072 / NBRC 15933 / NCIMB 10081 / Henssen B9) protein is 1D-myo-inositol 2-acetamido-2-deoxy-alpha-D-glucopyranoside deacetylase.